Reading from the N-terminus, the 229-residue chain is 2-phytyl-1,4-naphtoquinone methyltransferase (229 aa).

Belongs to the class I-like SAM-binding methyltransferase superfamily. MenG/UbiE family.

It carries out the reaction demethylphylloquinol + S-adenosyl-L-methionine = phylloquinol + S-adenosyl-L-homocysteine + H(+). The protein operates within cofactor biosynthesis; phylloquinone biosynthesis. Methyltransferase required for the conversion of 2-phytyl-1,4-beta-naphthoquinol to phylloquinol. The polypeptide is 2-phytyl-1,4-naphtoquinone methyltransferase (Nostoc sp. (strain PCC 7120 / SAG 25.82 / UTEX 2576)).